Consider the following 292-residue polypeptide: 4-diphosphocytidyl-2-C-methyl-D-erythritol kinase (292 aa).

The active site involves Lys20. 103 to 113 (PMGGGIGGGSS) contributes to the ATP binding site. Asp145 is a catalytic residue.

The protein belongs to the GHMP kinase family. IspE subfamily.

It carries out the reaction 4-CDP-2-C-methyl-D-erythritol + ATP = 4-CDP-2-C-methyl-D-erythritol 2-phosphate + ADP + H(+). It participates in isoprenoid biosynthesis; isopentenyl diphosphate biosynthesis via DXP pathway; isopentenyl diphosphate from 1-deoxy-D-xylulose 5-phosphate: step 3/6. Catalyzes the phosphorylation of the position 2 hydroxy group of 4-diphosphocytidyl-2C-methyl-D-erythritol. This Cupriavidus taiwanensis (strain DSM 17343 / BCRC 17206 / CCUG 44338 / CIP 107171 / LMG 19424 / R1) (Ralstonia taiwanensis (strain LMG 19424)) protein is 4-diphosphocytidyl-2-C-methyl-D-erythritol kinase.